The following is a 192-amino-acid chain: Elongation factor P (192 aa).

It belongs to the elongation factor P family.

It is found in the cytoplasm. It functions in the pathway protein biosynthesis; polypeptide chain elongation. Functionally, involved in peptide bond synthesis. Stimulates efficient translation and peptide-bond synthesis on native or reconstituted 70S ribosomes in vitro. Probably functions indirectly by altering the affinity of the ribosome for aminoacyl-tRNA, thus increasing their reactivity as acceptors for peptidyl transferase. The chain is Elongation factor P from Borrelia hermsii (strain HS1 / DAH).